The chain runs to 232 residues: 5'-methylthioadenosine/S-adenosylhomocysteine nucleosidase (232 aa).

The active-site Proton acceptor is the Glu12. Residues Gly78, Met153, and 174–175 (ME) each bind substrate. The Proton donor role is filled by Asp198.

Belongs to the PNP/UDP phosphorylase family. MtnN subfamily.

The enzyme catalyses S-adenosyl-L-homocysteine + H2O = S-(5-deoxy-D-ribos-5-yl)-L-homocysteine + adenine. It catalyses the reaction S-methyl-5'-thioadenosine + H2O = 5-(methylsulfanyl)-D-ribose + adenine. The catalysed reaction is 5'-deoxyadenosine + H2O = 5-deoxy-D-ribose + adenine. It participates in amino-acid biosynthesis; L-methionine biosynthesis via salvage pathway; S-methyl-5-thio-alpha-D-ribose 1-phosphate from S-methyl-5'-thioadenosine (hydrolase route): step 1/2. In terms of biological role, catalyzes the irreversible cleavage of the glycosidic bond in both 5'-methylthioadenosine (MTA) and S-adenosylhomocysteine (SAH/AdoHcy) to adenine and the corresponding thioribose, 5'-methylthioribose and S-ribosylhomocysteine, respectively. Also cleaves 5'-deoxyadenosine, a toxic by-product of radical S-adenosylmethionine (SAM) enzymes, into 5-deoxyribose and adenine. This is 5'-methylthioadenosine/S-adenosylhomocysteine nucleosidase from Anoxybacillus flavithermus (strain DSM 21510 / WK1).